A 417-amino-acid polypeptide reads, in one-letter code: Serine--tRNA ligase (417 aa).

Residue 225-227 (TLE) coordinates L-serine. 256–258 (RQE) contacts ATP. Glu279 lines the L-serine pocket. Position 343 to 346 (343 to 346 (EVSS)) interacts with ATP. Position 379 (Thr379) interacts with L-serine.

This sequence belongs to the class-II aminoacyl-tRNA synthetase family. Type-1 seryl-tRNA synthetase subfamily. In terms of assembly, homodimer. The tRNA molecule binds across the dimer.

The protein localises to the cytoplasm. It catalyses the reaction tRNA(Ser) + L-serine + ATP = L-seryl-tRNA(Ser) + AMP + diphosphate + H(+). The enzyme catalyses tRNA(Sec) + L-serine + ATP = L-seryl-tRNA(Sec) + AMP + diphosphate + H(+). The protein operates within aminoacyl-tRNA biosynthesis; selenocysteinyl-tRNA(Sec) biosynthesis; L-seryl-tRNA(Sec) from L-serine and tRNA(Sec): step 1/1. Functionally, catalyzes the attachment of serine to tRNA(Ser). Is also able to aminoacylate tRNA(Sec) with serine, to form the misacylated tRNA L-seryl-tRNA(Sec), which will be further converted into selenocysteinyl-tRNA(Sec). The chain is Serine--tRNA ligase from Mycoplasma genitalium (strain ATCC 33530 / DSM 19775 / NCTC 10195 / G37) (Mycoplasmoides genitalium).